Consider the following 108-residue polypeptide: UPF0060 membrane protein YnfA (108 aa).

Residues Met1–Thr5 lie on the Periplasmic side of the membrane. A helical membrane pass occupies residues Leu6 to Leu26. Residues Lys27–Ala30 are Cytoplasmic-facing. A helical membrane pass occupies residues Ser31–Leu51. Residues His52–Tyr60 lie on the Periplasmic side of the membrane. The helical transmembrane segment at Ala61–Val81 threads the bilayer. Residues Lys82–Thr84 are Cytoplasmic-facing. The helical transmembrane segment at Leu85–Trp105 threads the bilayer. The Periplasmic segment spans residues Gly106 to Thr108.

It belongs to the UPF0060 family.

The protein resides in the cell inner membrane. The protein is UPF0060 membrane protein YnfA of Escherichia coli O139:H28 (strain E24377A / ETEC).